Here is a 325-residue protein sequence, read N- to C-terminus: DNA-directed RNA polymerase subunit alpha (325 aa).

The interval 1-231 is alpha N-terminal domain (alpha-NTD); it reads MQTSLLKPKI…DQLSVFAALE (231 aa). The interval 246 to 325 is alpha C-terminal domain (alpha-CTD); sequence IDPILLRPVD…ENWPPAGLDK (80 aa).

It belongs to the RNA polymerase alpha chain family. As to quaternary structure, homodimer. The RNAP catalytic core consists of 2 alpha, 1 beta, 1 beta' and 1 omega subunit. When a sigma factor is associated with the core the holoenzyme is formed, which can initiate transcription.

The catalysed reaction is RNA(n) + a ribonucleoside 5'-triphosphate = RNA(n+1) + diphosphate. In terms of biological role, DNA-dependent RNA polymerase catalyzes the transcription of DNA into RNA using the four ribonucleoside triphosphates as substrates. The sequence is that of DNA-directed RNA polymerase subunit alpha from Paraburkholderia phytofirmans (strain DSM 17436 / LMG 22146 / PsJN) (Burkholderia phytofirmans).